Here is a 128-residue protein sequence, read N- to C-terminus: uncharacterized protein (128 aa).

The region spanning 1 to 126 (MHHIELYVSD…DRIKVELVAP (126 aa)) is the VOC domain.

This is an uncharacterized protein from Bacillus subtilis (strain 168).